We begin with the raw amino-acid sequence, 234 residues long: ATP synthase subunit a 2 (234 aa).

A run of 6 helical transmembrane segments spans residues 29–49, 90–110, 116–136, 147–167, 186–206, and 207–227; these read FFQH…VGLL, LIAT…IPGF, SLNT…IVGV, FMGP…IGHL, IVLM…MMLM, and GILV…IYIA.

Belongs to the ATPase A chain family. F-type ATPases have 2 components, CF(1) - the catalytic core - and CF(0) - the membrane proton channel. CF(1) has five subunits: alpha(3), beta(3), gamma(1), delta(1), epsilon(1). CF(0) has three main subunits: a(1), b(2) and c(9-12). The alpha and beta chains form an alternating ring which encloses part of the gamma chain. CF(1) is attached to CF(0) by a central stalk formed by the gamma and epsilon chains, while a peripheral stalk is formed by the delta and b chains.

It localises to the cell inner membrane. Functionally, key component of the proton channel; it plays a direct role in the translocation of protons across the membrane. The polypeptide is ATP synthase subunit a 2 (Syntrophotalea carbinolica (strain DSM 2380 / NBRC 103641 / GraBd1) (Pelobacter carbinolicus)).